The sequence spans 260 residues: tRNA pseudouridine synthase C (260 aa).

Asp54 is an active-site residue.

This sequence belongs to the pseudouridine synthase RluA family.

It catalyses the reaction uridine(65) in tRNA = pseudouridine(65) in tRNA. In terms of biological role, responsible for synthesis of pseudouridine from uracil-65 in transfer RNAs. The sequence is that of tRNA pseudouridine synthase C (truC) from Salmonella typhimurium (strain LT2 / SGSC1412 / ATCC 700720).